The following is a 259-amino-acid chain: MIEIKNIHKQFGIHHVLKGINLTVRKGEVVTIIGPSGSGKTTFLRCLNLLERPDEGIISIHDKVINCRFPSKKEVHWLRKQTAMVFQQYHLFAHKTVIENVMEGLTIARKMRKQDAYAVAENELRKVGLQDKLNAYPSQLSGGQKQRVGIARALAIHPDVLLFDEPTAALDPELVGEVLEVMLEIVKTGATMIVVTHEMEFARRVSDQVVFMDEGVIVEQGTPEEVFRHTKKDRTRQFLRRVSPEYLFEPKEHIKEPVI.

The region spanning 2–239 is the ABC transporter domain; that stretch reads IEIKNIHKQF…TKKDRTRQFL (238 aa). 34 to 41 serves as a coordination point for ATP; that stretch reads GPSGSGKT.

The protein belongs to the ABC transporter superfamily. L-cystine importer (TC 3.A.1.3.13) family. As to quaternary structure, the complex is composed of two ATP-binding proteins (TcyN), two transmembrane proteins (TcyL and TcyM) and two solute-binding proteins (TcyJ and TcyK).

It is found in the cell membrane. Part of the ABC transporter complex TcyJKLMN involved in L-cystine import. Responsible for energy coupling to the transport system. Is also involved in cystathionine, djenkolate, and S-methylcysteine transport. The polypeptide is L-cystine import ATP-binding protein TcyN (tcyN) (Bacillus subtilis (strain 168)).